We begin with the raw amino-acid sequence, 479 residues long: MAQTNGVLQEPAITTMNGAPVLKPASTQRIGNQLRATLLLQDINLLELIQHITHERIPERVVHARGTSAHGYFEVTDDISDVTSAAFLNRVGKQTDIFCRFSTVAGRAESAETVRDTRGFAFKMFTEEGNLDWLFLSTPVFPIRDGAKFPSFTHATKKNPRSGLPDHKAFWDYFTHNQEGIHFLMFLFSDRATPVDFQHADIFSINTYKFTKSDGSFTYVKIHLKTNQGVKNFTQDEANQKAGVDPDFQTRSLYEDIENQKYPTWDVFAQIIDPVKAENYHINIFDATKTFPFSEFPLRKFGKITLNRNVDNFFAEQEQSAFSPTNLVPGWALTPDPIIQTRALAYADTQRYRLGANFVQLPVNAPYKKPFTPLIRDGAATVNGNLGGTPNYFPSSFYNVGAATQYAQPDEEQFQGTVVNFESEVVDADYVQPRIFWEKTLAEEPGQQDNLISNVAGHLSAVTGDKGLGSSTSGLCNVR.

Residue histidine 63 is part of the active site. Position 346 (tyrosine 346) interacts with heme.

The protein belongs to the catalase family. Requires heme as cofactor.

The protein resides in the peroxisome matrix. It carries out the reaction 2 H2O2 = O2 + 2 H2O. Its function is as follows. Catalyzes the degradation of hydrogen peroxide (H(2)O(2)) generated by peroxisomal oxidases to water and oxygen, thereby protecting cells from the toxic effects of hydrogen peroxide. This chain is Catalase A (catA), found in Botryotinia fuckeliana (Noble rot fungus).